The primary structure comprises 308 residues: MTTSMPDIANHTTAQTEGTLDWVGMSNIEMPIMVASKGESERMVSAHIDAFVNLKDAQAKGIHMSRLYLLIDELSTSNILNYQSLVSLLDGFISSHQELSDQAKVQFCFDYHLRRKSLISGKEGWKAYPVTLTGNLNQGKLTIELTIDVPYSSTCPCSAALARQLIQKAFQDKFAQQSELALTDVHDWLGTTEGIVATPHSQRSVAEVKVKLNSSINDFPITEIVDLVENSLKTPVQAAVKREDEQEFARLNGQNLMFCEDAARRLQHSLNQTDQFDDFWLRINHLESLHAHDAVSVTTKGIKDGYQP.

Belongs to the GTP cyclohydrolase IV family.

It catalyses the reaction GTP + H2O = 7,8-dihydroneopterin 3'-triphosphate + formate + H(+). The protein operates within cofactor biosynthesis; 7,8-dihydroneopterin triphosphate biosynthesis; 7,8-dihydroneopterin triphosphate from GTP: step 1/1. In terms of biological role, converts GTP to 7,8-dihydroneopterin triphosphate. The polypeptide is GTP cyclohydrolase FolE2 (Colwellia psychrerythraea (strain 34H / ATCC BAA-681) (Vibrio psychroerythus)).